Reading from the N-terminus, the 204-residue chain is MTHFSQQDNFSVAARVLGALFYYAPESAEAAPLVAVLTSDGWETQWPLPEASLAPLVTAFQTQCEETHAQAWQRLFVGPWALPSPPWGSVWLDRESVLFGDSTLALRQWMREKGIQFEMKQNEPEDHFGSLLLMAAWLAENGRQTECEELLAWHLFPWSTRFLDVFIEKAEHPFYRALGELARLTLAQWQSQLLIPVAVKPLFR.

Belongs to the TorD/DmsD family. DmsD subfamily.

Functionally, required for biogenesis/assembly of DMSO reductase, but not for the interaction of the DmsA signal peptide with the Tat system. May be part of a chaperone cascade complex that facilitates a folding-maturation pathway for the substrate protein. This chain is Tat proofreading chaperone DmsD, found in Escherichia coli O157:H7.